The chain runs to 225 residues: MEPIKNIPRLCRTLGYEFAEQALLDQALTHRSASNKHNERLEFLGDSILSIVISDALYHQFPKATEGDLSRMRATLVCGKMLAEIAIEFKLGDYLKLGPGELKSGGFRRESILADAVEAIIGAIYLDSDIEKCRKLVLNWYASRLRVIEPINQKDPKTLLQEHLQKFRKPLPIYKVVHTEGDAHEQTFTVECVVEDLRQAVVGVASSRRKAEQSAAAQVLELIKK.

In terms of domain architecture, RNase III spans 7-129; the sequence is IPRLCRTLGY…IIGAIYLDSD (123 aa). A Mg(2+)-binding site is contributed by Glu42. Asp46 is an active-site residue. Mg(2+)-binding residues include Asp115 and Glu118. Residue Glu118 is part of the active site. One can recognise a DRBM domain in the interval 155 to 225; sequence DPKTLLQEHL…AAQVLELIKK (71 aa).

Belongs to the ribonuclease III family. As to quaternary structure, homodimer. Mg(2+) is required as a cofactor.

It localises to the cytoplasm. The catalysed reaction is Endonucleolytic cleavage to 5'-phosphomonoester.. Its function is as follows. Digests double-stranded RNA. Involved in the processing of primary rRNA transcript to yield the immediate precursors to the large and small rRNAs (23S and 16S). Processes some mRNAs, and tRNAs when they are encoded in the rRNA operon. Processes pre-crRNA and tracrRNA of type II CRISPR loci if present in the organism. This chain is Ribonuclease 3, found in Shewanella piezotolerans (strain WP3 / JCM 13877).